Here is a 185-residue protein sequence, read N- to C-terminus: Ribosome-recycling factor (185 aa).

Belongs to the RRF family.

Its subcellular location is the cytoplasm. Its function is as follows. Responsible for the release of ribosomes from messenger RNA at the termination of protein biosynthesis. May increase the efficiency of translation by recycling ribosomes from one round of translation to another. This is Ribosome-recycling factor from Francisella philomiragia subsp. philomiragia (strain ATCC 25017 / CCUG 19701 / FSC 153 / O#319-036).